The following is a 339-amino-acid chain: Protein FAM76B (339 aa).

Alanine 2 carries the post-translational modification N-acetylalanine. A phosphoserine mark is found at serine 22 and serine 148. Residues 144 to 243 (EQRKSLGSSH…INQSADSGGT (100 aa)) are disordered. Low complexity predominate over residues 148–160 (SLGSSHSNSSSSS). Basic residues predominate over residues 167 to 189 (HHPKHHHHHHHHHHRHSSSHHKI). At serine 193 the chain carries Phosphoserine. The residue at position 215 (threonine 215) is a Phosphothreonine. The segment covering 215 to 224 (TPKKKPKLES) has biased composition (basic and acidic residues). Over residues 228-243 (NGDSSSINQSADSGGT) the composition is skewed to polar residues. Residues 248–328 (LISQLKEEVM…QVAALSKGKK (81 aa)) are a coiled coil.

The protein belongs to the FAM76 family. As to quaternary structure, interacts with HNRNPA2B1 (via C-terminus); the interaction results in retention of HNRNPA2B1 in the nucleus and inhibition of the NF-kappa-B-mediated inflammatory pathway.

It localises to the nucleus speckle. Functionally, negatively regulates the NF-kappa-B-mediated inflammatory pathway by preventing the translocation of HNRNPA2B1 from the nucleus to the cytoplasm. Inhibits the PI3K/Akt/NF-kappa-B pathway-mediated polarization of M1 macrophages by binding to and stabilizing PIK3CD mRNA, resulting in increased levels of PIK3CD protein and increased levels of phosphorylated downstream target AKT which leads to decreased NF-kappa-B signaling. This is Protein FAM76B (FAM76B) from Homo sapiens (Human).